The sequence spans 471 residues: Ribulose bisphosphate carboxylase large chain (471 aa).

The substrate site is built by Asn-115 and Thr-165. The active-site Proton acceptor is the Lys-167. Lys-169 contributes to the substrate binding site. Mg(2+)-binding residues include Lys-193, Asp-195, and Glu-196. The residue at position 193 (Lys-193) is an N6-carboxylysine. His-286 serves as the catalytic Proton acceptor. Residues Arg-287, His-319, and Ser-371 each contribute to the substrate site.

This sequence belongs to the RuBisCO large chain family. Type I subfamily. In terms of assembly, heterohexadecamer of 8 large chains and 8 small chains. The cofactor is Mg(2+).

Its subcellular location is the carboxysome. It carries out the reaction 2 (2R)-3-phosphoglycerate + 2 H(+) = D-ribulose 1,5-bisphosphate + CO2 + H2O. The enzyme catalyses D-ribulose 1,5-bisphosphate + O2 = 2-phosphoglycolate + (2R)-3-phosphoglycerate + 2 H(+). Functionally, ruBisCO catalyzes two reactions: the carboxylation of D-ribulose 1,5-bisphosphate, the primary event in carbon dioxide fixation, as well as the oxidative fragmentation of the pentose substrate in the photorespiration process. Both reactions occur simultaneously and in competition at the same active site. The sequence is that of Ribulose bisphosphate carboxylase large chain from Synechococcus sp. (strain RCC307).